The primary structure comprises 103 residues: Methane monooxygenase component D (103 aa).

As to quaternary structure, the soluble methane monooxygenase (sMMO) consists of four components A/MMOH (composed of alpha/MmoX, beta/MmoY and gamma/MmoZ), B/MMOB (MmoB), C/MMOR (MmoC) and D/MMOD (MmoD).

The chain is Methane monooxygenase component D (mmoD) from Methylococcus capsulatus (strain ATCC 33009 / NCIMB 11132 / Bath).